The primary structure comprises 438 residues: Elongation factor 1-alpha (438 aa).

Residues K6–K229 enclose the tr-type G domain. The tract at residues G15–S22 is G1. G15 to S22 is a GTP binding site. Mg(2+) is bound at residue S22. The segment at G71–S75 is G2. Residues D92 to G95 form a G3 region. Residues D92 to H96 and N154 to D157 each bind GTP. The interval N154–D157 is G4. The tract at residues S195–W197 is G5.

The protein belongs to the TRAFAC class translation factor GTPase superfamily. Classic translation factor GTPase family. EF-Tu/EF-1A subfamily.

It is found in the cytoplasm. The catalysed reaction is GTP + H2O = GDP + phosphate + H(+). Functionally, GTP hydrolase that promotes the GTP-dependent binding of aminoacyl-tRNA to the A-site of ribosomes during protein biosynthesis. This Desulfurococcus mucosus (Desulfurococcus mobilis) protein is Elongation factor 1-alpha.